We begin with the raw amino-acid sequence, 162 residues long: Endoribonuclease YbeY (162 aa).

Zn(2+)-binding residues include His126, His130, and His136.

This sequence belongs to the endoribonuclease YbeY family. Requires Zn(2+) as cofactor.

The protein localises to the cytoplasm. Single strand-specific metallo-endoribonuclease involved in late-stage 70S ribosome quality control and in maturation of the 3' terminus of the 16S rRNA. The sequence is that of Endoribonuclease YbeY from Fusobacterium nucleatum subsp. nucleatum (strain ATCC 25586 / DSM 15643 / BCRC 10681 / CIP 101130 / JCM 8532 / KCTC 2640 / LMG 13131 / VPI 4355).